We begin with the raw amino-acid sequence, 289 residues long: Ribosomal RNA small subunit methyltransferase A (289 aa).

Residues Asn-21, Leu-23, Gly-48, Glu-69, Asp-94, and Asn-120 each coordinate S-adenosyl-L-methionine.

It belongs to the class I-like SAM-binding methyltransferase superfamily. rRNA adenine N(6)-methyltransferase family. RsmA subfamily.

The protein localises to the cytoplasm. It carries out the reaction adenosine(1518)/adenosine(1519) in 16S rRNA + 4 S-adenosyl-L-methionine = N(6)-dimethyladenosine(1518)/N(6)-dimethyladenosine(1519) in 16S rRNA + 4 S-adenosyl-L-homocysteine + 4 H(+). Functionally, specifically dimethylates two adjacent adenosines (A1518 and A1519) in the loop of a conserved hairpin near the 3'-end of 16S rRNA in the 30S particle. May play a critical role in biogenesis of 30S subunits. The chain is Ribosomal RNA small subunit methyltransferase A from Actinobacillus pleuropneumoniae serotype 7 (strain AP76).